The following is a 369-amino-acid chain: Anhydro-N-acetylmuramic acid kinase (369 aa).

12–19 (GTSLDGVD) is an ATP binding site.

The protein belongs to the anhydro-N-acetylmuramic acid kinase family.

It catalyses the reaction 1,6-anhydro-N-acetyl-beta-muramate + ATP + H2O = N-acetyl-D-muramate 6-phosphate + ADP + H(+). It participates in amino-sugar metabolism; 1,6-anhydro-N-acetylmuramate degradation. It functions in the pathway cell wall biogenesis; peptidoglycan recycling. In terms of biological role, catalyzes the specific phosphorylation of 1,6-anhydro-N-acetylmuramic acid (anhMurNAc) with the simultaneous cleavage of the 1,6-anhydro ring, generating MurNAc-6-P. Is required for the utilization of anhMurNAc either imported from the medium or derived from its own cell wall murein, and thus plays a role in cell wall recycling. The protein is Anhydro-N-acetylmuramic acid kinase of Escherichia coli O8 (strain IAI1).